A 665-amino-acid chain; its full sequence is Protein-arginine deiminase type-2 (665 aa).

Ca(2+) is bound by residues Asp123, Asp125, Asp127, Glu131, Asn154, Asp156, Asp158, Asp166, Asp169, Lys171, Asp177, Asp180, Glu354, Asp389, Phe408, Leu411, and Glu412. The active-site Nucleophile is the Cys647.

Belongs to the protein arginine deiminase family. Homodimer. Ca(2+) serves as cofactor. As to expression, spinal cord, submaxillary gland, cerebrum, cerebellum, and skeletal muscle.

The protein localises to the cytoplasm. The enzyme catalyses L-arginyl-[protein] + H2O = L-citrullyl-[protein] + NH4(+). In terms of biological role, catalyzes the deimination of arginine residues of proteins. This chain is Protein-arginine deiminase type-2 (Padi2), found in Rattus norvegicus (Rat).